Consider the following 100-residue polypeptide: Omega-hexatoxin-Asp2b (100 aa).

Positions Met1–Gly23 are cleaved as a signal peptide. A propeptide spanning residues Met24 to Glu55 is cleaved from the precursor. 3 disulfide bridges follow: Cys60-Cys73, Cys66-Cys79, and Cys72-Cys84.

It belongs to the neurotoxin 15 family. 02 (omega-actx) subfamily. Expressed by the venom gland.

Its subcellular location is the secreted. In terms of biological role, potent inhibitor of insect, but not mammalian, voltage-gated calcium channels (Cav). The sequence is that of Omega-hexatoxin-Asp2b from Atrax sp. (strain Illawarra) (Funnel-web spider).